We begin with the raw amino-acid sequence, 309 residues long: N(5)-(carboxyethyl)ornithine synthase (309 aa).

Residues R15, K71, and H92 each contribute to the pyruvate site. 171-176 (GSGNVA) serves as a coordination point for NADP(+).

Belongs to the AlaDH/PNT family. CEOS subfamily. As to quaternary structure, homotetramer.

It carries out the reaction N(5)-[1(S)-1-carboxyethyl]-L-ornithine + NADP(+) + H2O = L-ornithine + pyruvate + NADPH + H(+). Functionally, catalyzes the NADPH-dependent reductive condensation between pyruvic acid and the side chain amino group of L-ornithine to form N(5)-(L-1-carboxyethyl)-L-ornithine. To a lesser extent, can also use L-lysine as substrate (yielding N(6)-(L-1-carboxyethyl)-L-lysine). This Lactococcus lactis subsp. lactis (strain IL1403) (Streptococcus lactis) protein is N(5)-(carboxyethyl)ornithine synthase (ceo).